Reading from the N-terminus, the 224-residue chain is 7-cyano-7-deazaguanine synthase (224 aa).

An ATP-binding site is contributed by leucine 12–threonine 22. Zn(2+) contacts are provided by cysteine 193, cysteine 201, cysteine 204, and cysteine 207.

It belongs to the QueC family. Zn(2+) is required as a cofactor.

It catalyses the reaction 7-carboxy-7-deazaguanine + NH4(+) + ATP = 7-cyano-7-deazaguanine + ADP + phosphate + H2O + H(+). It functions in the pathway purine metabolism; 7-cyano-7-deazaguanine biosynthesis. Catalyzes the ATP-dependent conversion of 7-carboxy-7-deazaguanine (CDG) to 7-cyano-7-deazaguanine (preQ(0)). This chain is 7-cyano-7-deazaguanine synthase, found in Prochlorococcus marinus (strain MIT 9215).